The following is a 238-amino-acid chain: MPKKISRRLQELRKKVEERPYEPKEALQLLKETATAKFLEAAEAHVRLGIDPKYTDQQLRTTVALPKGTGQTIRIAVIAKGEKVNEALAAGADLAGSEELIEQISKGMMEFDRLIATPDVMPQVAKLGRLLGPRGLMPSPKGGTVTFDLTKAIDEFKAGKLEFRADRSGIVHVMFGKTSFSVEDLLINLKALQECIDRNRPSGAKGRYWRTIFVSATMGPSIEIDVSSLQDLKLTEAA.

This sequence belongs to the universal ribosomal protein uL1 family. As to quaternary structure, part of the 50S ribosomal subunit.

Functionally, binds directly to 23S rRNA. The L1 stalk is quite mobile in the ribosome, and is involved in E site tRNA release. In terms of biological role, protein L1 is also a translational repressor protein, it controls the translation of the L11 operon by binding to its mRNA. This Trichodesmium erythraeum (strain IMS101) protein is Large ribosomal subunit protein uL1.